A 303-amino-acid chain; its full sequence is Mycothiol acetyltransferase (303 aa).

N-acetyltransferase domains are found at residues 6 to 134 (TSLA…VEGD) and 154 to 303 (NEAY…QSSS). Residue glutamate 37 coordinates 1D-myo-inositol 2-(L-cysteinylamino)-2-deoxy-alpha-D-glucopyranoside. Residues 75–77 (VVV) and 83–88 (RQGYGS) each bind acetyl-CoA. Positions 180, 221, and 233 each coordinate 1D-myo-inositol 2-(L-cysteinylamino)-2-deoxy-alpha-D-glucopyranoside. Residues 237-239 (VGL) and 244-250 (RRRGLGD) contribute to the acetyl-CoA site. Residue tyrosine 271 coordinates 1D-myo-inositol 2-(L-cysteinylamino)-2-deoxy-alpha-D-glucopyranoside. 276-281 (NESARR) lines the acetyl-CoA pocket.

It belongs to the acetyltransferase family. MshD subfamily. Monomer.

It catalyses the reaction 1D-myo-inositol 2-(L-cysteinylamino)-2-deoxy-alpha-D-glucopyranoside + acetyl-CoA = mycothiol + CoA + H(+). Catalyzes the transfer of acetyl from acetyl-CoA to desacetylmycothiol (Cys-GlcN-Ins) to form mycothiol. This Corynebacterium diphtheriae (strain ATCC 700971 / NCTC 13129 / Biotype gravis) protein is Mycothiol acetyltransferase.